The sequence spans 451 residues: DNA double-strand break repair protein Mre11 (451 aa).

4 residues coordinate Mn(2+): aspartate 8, histidine 10, aspartate 49, and asparagine 84. The active-site Proton donor is the histidine 85. Histidine 168, histidine 198, and histidine 200 together coordinate Mn(2+). Positions 374–451 (REDNPPDLGD…GRPSLDRWIG (78 aa)) are disordered. Residues 396–416 (GSEESSEEPEESDGEEVGLEV) show a composition bias toward acidic residues.

This sequence belongs to the MRE11/RAD32 family. In terms of assembly, homodimer. Forms a heterotetramer composed of two Mre11 subunits and two Rad50 subunits. Mn(2+) is required as a cofactor.

With respect to regulation, nuclease activity is regulated by Rad50. Functionally, part of the Rad50/Mre11 complex, which is involved in the early steps of DNA double-strand break (DSB) repair. The complex may facilitate opening of the processed DNA ends to aid in the recruitment of HerA and NurA. Mre11 binds to DSB ends and has both double-stranded 3'-5' exonuclease activity and single-stranded endonuclease activity. The polypeptide is DNA double-strand break repair protein Mre11 (Methanopyrus kandleri (strain AV19 / DSM 6324 / JCM 9639 / NBRC 100938)).